A 974-amino-acid polypeptide reads, in one-letter code: Valine--tRNA ligase, chloroplastic/mitochondrial 2 (974 aa).

The 'HIGH' region motif lies at 109–119; that stretch reads PNVTGSLHMGH. One copy of the LRR 1 repeat lies at 432–454; it reads LAEKALLAVENKELTIIPERFEK. The stretch at 489-518 forms a coiled coil; sequence EEDYIVAKSAEEALEKALEKYGKDVEIYQD. The 'KMSKS' region motif lies at 598–602; the sequence is KMSKS. Lys601 serves as a coordination point for ATP. The LRR 2 repeat unit spans residues 857–880; the sequence is LALLSRLDLNNVHFSNAPPGDANL.

It belongs to the class-I aminoacyl-tRNA synthetase family.

It localises to the plastid. The protein localises to the chloroplast. It is found in the mitochondrion. It carries out the reaction tRNA(Val) + L-valine + ATP = L-valyl-tRNA(Val) + AMP + diphosphate. The chain is Valine--tRNA ligase, chloroplastic/mitochondrial 2 from Arabidopsis thaliana (Mouse-ear cress).